The sequence spans 94 residues: Phosphoribosyl-ATP pyrophosphatase (94 aa).

This sequence belongs to the PRA-PH family.

It localises to the cytoplasm. It carries out the reaction 1-(5-phospho-beta-D-ribosyl)-ATP + H2O = 1-(5-phospho-beta-D-ribosyl)-5'-AMP + diphosphate + H(+). Its pathway is amino-acid biosynthesis; L-histidine biosynthesis; L-histidine from 5-phospho-alpha-D-ribose 1-diphosphate: step 2/9. In Saccharolobus solfataricus (strain ATCC 35092 / DSM 1617 / JCM 11322 / P2) (Sulfolobus solfataricus), this protein is Phosphoribosyl-ATP pyrophosphatase (hisE).